We begin with the raw amino-acid sequence, 336 residues long: Succinylglutamate desuccinylase (336 aa).

Zn(2+) contacts are provided by H59, E62, and H151. Residue E215 is part of the active site.

This sequence belongs to the AspA/AstE family. Succinylglutamate desuccinylase subfamily. Zn(2+) serves as cofactor.

It carries out the reaction N-succinyl-L-glutamate + H2O = L-glutamate + succinate. It functions in the pathway amino-acid degradation; L-arginine degradation via AST pathway; L-glutamate and succinate from L-arginine: step 5/5. Functionally, transforms N(2)-succinylglutamate into succinate and glutamate. This Pseudomonas fluorescens (strain Pf0-1) protein is Succinylglutamate desuccinylase.